Reading from the N-terminus, the 220-residue chain is Ribonuclease HII (220 aa).

Residues 32 to 220 (KHIAGIDEAG…FAPIKGRFDC (189 aa)) form the RNase H type-2 domain. Residues Asp-38, Glu-39, and Asp-130 each contribute to the a divalent metal cation site.

Belongs to the RNase HII family. Mn(2+) is required as a cofactor. The cofactor is Mg(2+).

It localises to the cytoplasm. The enzyme catalyses Endonucleolytic cleavage to 5'-phosphomonoester.. Functionally, endonuclease that specifically degrades the RNA of RNA-DNA hybrids. The sequence is that of Ribonuclease HII from Brucella canis (strain ATCC 23365 / NCTC 10854 / RM-666).